Reading from the N-terminus, the 378-residue chain is Ribosomal RNA large subunit methyltransferase G (378 aa).

This sequence belongs to the methyltransferase superfamily. RlmG family.

It is found in the cytoplasm. It catalyses the reaction guanosine(1835) in 23S rRNA + S-adenosyl-L-methionine = N(2)-methylguanosine(1835) in 23S rRNA + S-adenosyl-L-homocysteine + H(+). Its function is as follows. Specifically methylates the guanine in position 1835 (m2G1835) of 23S rRNA. The chain is Ribosomal RNA large subunit methyltransferase G from Shewanella baltica (strain OS185).